Consider the following 402-residue polypeptide: S-adenosylmethionine synthase (402 aa).

137 to 142 is an ATP binding site; it reads GQGSAD.

The protein belongs to the AdoMet synthase 2 family. It depends on Mg(2+) as a cofactor.

It carries out the reaction L-methionine + ATP + H2O = S-adenosyl-L-methionine + phosphate + diphosphate. It participates in amino-acid biosynthesis; S-adenosyl-L-methionine biosynthesis; S-adenosyl-L-methionine from L-methionine: step 1/1. Functionally, catalyzes the formation of S-adenosylmethionine from methionine and ATP. This chain is S-adenosylmethionine synthase, found in Pyrobaculum calidifontis (strain DSM 21063 / JCM 11548 / VA1).